The sequence spans 288 residues: Transmembrane and coiled-coil domain-containing protein 5A (288 aa).

The stretch at 10 to 192 (KRNIISLNMD…ALFLEREVSK (183 aa)) forms a coiled coil. The chain crosses the membrane as a helical span at residues 224-244 (IFCCLFFITLFFIRLLSYMFF).

It belongs to the TMCO5 family.

The protein resides in the endoplasmic reticulum membrane. The protein localises to the nucleus membrane. This is Transmembrane and coiled-coil domain-containing protein 5A (TMCO5A) from Homo sapiens (Human).